Here is a 1250-residue protein sequence, read N- to C-terminus: Immunoglobulin superfamily DCC subclass member 4 (1250 aa).

Residues 1-24 (MARGDAGRGRGLLALTFCLLAARG) form the signal peptide. At 25-957 (ELLLPQETTV…SDSLDMHSVT (933 aa)) the chain is on the extracellular side. Ig-like C2-type domains lie at 29–137 (PQET…TAVV), 143–229 (ADFS…ALLS), 242–330 (QDVV…AELR), and 335–421 (PAIT…ASLA). C57 and C121 are joined by a disulfide. N-linked (GlcNAc...) asparagine glycosylation is found at N90, N102, and N157. An intrachain disulfide couples C164 to C212. Residue N252 is glycosylated (N-linked (GlcNAc...) asparagine). 2 disulfides stabilise this stretch: C265–C312 and C356–C405. Fibronectin type-III domains follow at residues 431 to 525 (APTR…TLDD), 527 to 623 (PSAA…TPSM), 632 to 741 (APAE…APAP), 752 to 845 (PPAH…TLPD), and 850 to 945 (PPSD…TLQE). N-linked (GlcNAc...) asparagine glycosylation occurs at N582. A helical membrane pass occupies residues 958–978 (GIIVGVCLGLLCLLACMCAGL). Residues 979-1250 (RRSPHRESLP…LPRSPVSSSA (272 aa)) are Cytoplasmic-facing. T995 is modified (phosphothreonine). Disordered regions lie at residues 1140-1175 (SASNGNPDLHLQDLEPEDPLPPEAPDLISGVGDPGQ) and 1215-1250 (PGEVLEETPGDSCQLKSPCPLGASPGLPRSPVSSSA).

It belongs to the immunoglobulin superfamily. DCC family.

It is found in the cell membrane. The chain is Immunoglobulin superfamily DCC subclass member 4 (IGDCC4) from Homo sapiens (Human).